Reading from the N-terminus, the 305-residue chain is Ribonuclease BN (305 aa).

7 residues coordinate Zn(2+): His64, His66, Asp68, His69, His141, Asp212, and His270. Asp68 serves as the catalytic Proton acceptor.

Belongs to the RNase Z family. RNase BN subfamily. In terms of assembly, homodimer. The cofactor is Zn(2+).

Functionally, zinc phosphodiesterase, which has both exoribonuclease and endoribonuclease activities. This is Ribonuclease BN from Escherichia coli O157:H7.